A 126-amino-acid chain; its full sequence is Arginine decarboxylase proenzyme (126 aa).

Ser74 acts as the Schiff-base intermediate with substrate; via pyruvic acid in catalysis. Position 74 is a pyruvic acid (Ser); by autocatalysis (Ser74). Catalysis depends on His79, which acts as the Proton acceptor; for processing activity. The active-site Proton donor; for catalytic activity is Cys94.

Belongs to the prokaryotic AdoMetDC family. Type 1 subfamily. In terms of assembly, heterooctamer of four alpha and four beta chains arranged as a tetramer of alpha/beta heterodimers. Requires pyruvate as cofactor. In terms of processing, is synthesized initially as an inactive proenzyme. Formation of the active enzyme involves a self-maturation process in which the active site pyruvoyl group is generated from an internal serine residue via an autocatalytic post-translational modification. Two non-identical subunits are generated from the proenzyme in this reaction, and the pyruvate is formed at the N-terminus of the alpha chain, which is derived from the carboxyl end of the proenzyme. The post-translation cleavage follows an unusual pathway, termed non-hydrolytic serinolysis, in which the side chain hydroxyl group of the serine supplies its oxygen atom to form the C-terminus of the beta chain, while the remainder of the serine residue undergoes an oxidative deamination to produce ammonia and the pyruvoyl group blocking the N-terminus of the alpha chain.

It catalyses the reaction L-arginine + H(+) = agmatine + CO2. The protein operates within amine and polyamine biosynthesis; agmatine biosynthesis; agmatine from L-arginine: step 1/1. In terms of biological role, specifically catalyzes the decarboxylation of L-arginine to agmatine. Has no S-adenosylmethionine decarboxylase (AdoMetDC) activity. In Pyrobaculum aerophilum (strain ATCC 51768 / DSM 7523 / JCM 9630 / CIP 104966 / NBRC 100827 / IM2), this protein is Arginine decarboxylase proenzyme.